The chain runs to 678 residues: Mitogen-activated protein kinase kinase kinase 7 (678 aa).

One can recognise a Protein kinase domain in the interval 19–271 (ITLREKVGHG…YIVGVMHEIV (253 aa)). Residues 25-33 (VGHGSYGVV) and Lys-46 each bind ATP. Asp-140 serves as the catalytic Proton acceptor. Disordered regions lie at residues 296–322 (DGTVAAQPDSLSSQEGELSPSSTQLTP), 339–365 (TTSSMTENTSSTSSDITPTNSGQLDNN), 431–455 (DLSPSESSSSSTNAKSDGRERLTVT), and 616–647 (QLAAGHHPQPHPHPHPNQLQHPHSHPPMHFLQ). Composition is skewed to low complexity over residues 313–322 (LSPSSTQLTP) and 339–352 (TTSSMTENTSSTSS). The span at 353-364 (DITPTNSGQLDN) shows a compositional bias: polar residues.

The protein belongs to the protein kinase superfamily. STE Ser/Thr protein kinase family. MAP kinase kinase kinase subfamily. Mg(2+) serves as cofactor.

The catalysed reaction is L-seryl-[protein] + ATP = O-phospho-L-seryl-[protein] + ADP + H(+). It catalyses the reaction L-threonyl-[protein] + ATP = O-phospho-L-threonyl-[protein] + ADP + H(+). In terms of biological role, component of a protein kinase signal transduction cascade. Mediator of TGF-beta signal transduction. Responsible for activation of the JNK MAPK pathway (basket, bsk and hemipterous, hep) in response to LPS. Component of the NF-kappa-B pathway; relish-mediated JNK inhibition involves proteasomal degradation of Tak1; certain targets of Relish that are induced during immune responses may facilitate destruction of Tak1 and switch off the JNK cascade. Participates in diverse roles such as control of cell shape and regulation of apoptosis. The polypeptide is Mitogen-activated protein kinase kinase kinase 7 (Tak1) (Drosophila melanogaster (Fruit fly)).